The sequence spans 272 residues: Imidazole glycerol phosphate synthase subunit HisF (272 aa).

Residues Asp11 and Asp130 contribute to the active site.

It belongs to the HisA/HisF family. As to quaternary structure, heterodimer of HisH and HisF.

It is found in the cytoplasm. It carries out the reaction 5-[(5-phospho-1-deoxy-D-ribulos-1-ylimino)methylamino]-1-(5-phospho-beta-D-ribosyl)imidazole-4-carboxamide + L-glutamine = D-erythro-1-(imidazol-4-yl)glycerol 3-phosphate + 5-amino-1-(5-phospho-beta-D-ribosyl)imidazole-4-carboxamide + L-glutamate + H(+). Its pathway is amino-acid biosynthesis; L-histidine biosynthesis; L-histidine from 5-phospho-alpha-D-ribose 1-diphosphate: step 5/9. In terms of biological role, IGPS catalyzes the conversion of PRFAR and glutamine to IGP, AICAR and glutamate. The HisF subunit catalyzes the cyclization activity that produces IGP and AICAR from PRFAR using the ammonia provided by the HisH subunit. In Methanococcus maripaludis (strain C6 / ATCC BAA-1332), this protein is Imidazole glycerol phosphate synthase subunit HisF.